A 198-amino-acid chain; its full sequence is Superoxide dismutase [Fe] (198 aa).

Residues histidine 27, histidine 74, aspartate 157, and histidine 161 each coordinate Fe cation.

It belongs to the iron/manganese superoxide dismutase family. In terms of assembly, homodimer. It depends on Fe cation as a cofactor.

The enzyme catalyses 2 superoxide + 2 H(+) = H2O2 + O2. In terms of biological role, destroys superoxide anion radicals which are normally produced within the cells and which are toxic to biological systems. This is Superoxide dismutase [Fe] (sodB) from Pseudomonas putida (strain ATCC 47054 / DSM 6125 / CFBP 8728 / NCIMB 11950 / KT2440).